Consider the following 645-residue polypeptide: Serine/threonine-protein kinase BUR1 (645 aa).

Residues 55–379 (YREEEKLGQG…AMKAKKHPFF (325 aa)) form the Protein kinase domain. ATP contacts are provided by residues 61-69 (LGQGTFGEV) and Lys84. Asp208 functions as the Proton acceptor in the catalytic mechanism. Disordered stretches follow at residues 407 to 428 (EMNESMSQRPPSAPTGHTSTDN), 442 to 513 (ASIP…KYPA), and 533 to 645 (RYRN…ADYY). 2 stretches are compositionally biased toward polar residues: residues 409–428 (NESMSQRPPSAPTGHTSTDN) and 457–474 (IPAQPSASRYNGAATQNI). Positions 477–486 (EPIPTAPLPK) are enriched in pro residues. The segment covering 578 to 598 (NRYQNQDYNTSRNTGYNQYSQ) has biased composition (polar residues).

It belongs to the protein kinase superfamily. CMGC Ser/Thr protein kinase family. CDC2/CDKX subfamily.

Its subcellular location is the nucleus. It carries out the reaction L-seryl-[protein] + ATP = O-phospho-L-seryl-[protein] + ADP + H(+). The enzyme catalyses L-threonyl-[protein] + ATP = O-phospho-L-threonyl-[protein] + ADP + H(+). It catalyses the reaction [DNA-directed RNA polymerase] + ATP = phospho-[DNA-directed RNA polymerase] + ADP + H(+). Its function is as follows. Serine/threonine-protein kinase involved in transcription regulation. Phosphorylates the UBC2/RAD6 ubiquitin-conjugating enzyme (E2), leading to monoubiquitination of histone H2B and the silencing of telomeric-associated genes. Also required for histone H3 methylation. Necessary for the recovery from pheromone-induced growth arrest in the cell cycle G1 phase. This chain is Serine/threonine-protein kinase BUR1 (BUR1), found in Kluyveromyces lactis (strain ATCC 8585 / CBS 2359 / DSM 70799 / NBRC 1267 / NRRL Y-1140 / WM37) (Yeast).